The sequence spans 137 residues: uncharacterized protein (137 aa).

Residues 30–105 (SLLCVFTALR…IRFIQIPDKI (76 aa)) enclose the Sm domain.

This is an uncharacterized protein from Dictyostelium discoideum (Social amoeba).